A 237-amino-acid chain; its full sequence is Ig heavy chain Mem5 (237 aa).

2 Ig-like domains span residues 1 to 119 (EVKL…LTVS) and 126 to 218 (PSVY…KKIE). Cysteines 22 and 98 form a disulfide. Residues 101–105 (VDYGT) are d segment. Residues 106-120 (NYDYWGQGTTLTVSS) form a JH2 segment region. Cysteines 147 and 202 form a disulfide.

Its subcellular location is the secreted. In terms of biological role, anti-influenza H3N2 neuraminidase antibody. The chain is Ig heavy chain Mem5 from Mus musculus (Mouse).